A 330-amino-acid polypeptide reads, in one-letter code: Mas-related G-protein coupled receptor member B8 (330 aa).

Topologically, residues 1 to 33 are extracellular; the sequence is MDSSFPDWNIEFREQNESYFMESSSCDMSLAMS. A glycan (N-linked (GlcNAc...) asparagine) is linked at Asn16. The helical transmembrane segment at 34–54 threads the bilayer; it reads LLSIIIAIIGLTGNVIVLQLL. Residues 55–62 lie on the Cytoplasmic side of the membrane; sequence GFHMHRNA. The chain crosses the membrane as a helical span at residues 63-83; sequence FSVYIFNLSGANFLFLCTHIV. Residues 84 to 101 lie on the Extracellular side of the membrane; sequence FSLENLIRQFHYIDIHMA. A helical transmembrane segment spans residues 102–122; that stretch reads LFSVNVTILAYLAGVSMITAI. At 123-146 the chain is on the cytoplasmic side; sequence SVEYWLSVLWPTWYHAQRPKHTST. The helical transmembrane segment at 147–167 threads the bilayer; that stretch reads VICTLLWVFSLLLTLWNWIIC. Residues 168 to 177 are Extracellular-facing; the sequence is KVLDYIYNWD. A helical transmembrane segment spans residues 178–198; sequence MCWKLALIIVVWLLVLFVVLS. Over 199–219 the chain is Cytoplasmic; it reads RSNQALLFRVFCGSQQTPVTR. A helical transmembrane segment spans residues 220–240; it reads LLVTIMLTALVVLICGFGIGI. The Extracellular portion of the chain corresponds to 241-260; sequence CFFYWKKEENSIMPCGYFYE. Residues 261 to 281 form a helical membrane-spanning segment; the sequence is TILLLSGVNSCANPIICLFVG. The Cytoplasmic segment spans residues 282 to 330; sequence SIKHCQFQCGTLRLILQRAIQESPEEEDEEVEEVVEQEGGEEDEESTTL. The tract at residues 302 to 330 is disordered; the sequence is QESPEEEDEEVEEVVEQEGGEEDEESTTL. Residues 304-330 are compositionally biased toward acidic residues; it reads SPEEEDEEVEEVVEQEGGEEDEESTTL.

The protein belongs to the G-protein coupled receptor 1 family. Mas subfamily.

It is found in the membrane. Orphan receptor. Probably involved in the function of nociceptive neurons. May regulate nociceptor function and/or development, including the sensation or modulation of pain. This chain is Mas-related G-protein coupled receptor member B8 (Mrgprb8), found in Mus musculus (Mouse).